A 650-amino-acid chain; its full sequence is Chaperone protein HtpG (650 aa).

Residues 1 to 349 form an a; substrate-binding region; the sequence is MTKTTKKFET…SSDLPLNVSR (349 aa). The interval 350–566 is b; sequence EILQEDVQIK…EHGLNANMER (217 aa). The interval 567 to 650 is c; the sequence is ILRAMNQDVP…VADGKAAAGE (84 aa).

The protein belongs to the heat shock protein 90 family. In terms of assembly, homodimer.

Its subcellular location is the cytoplasm. In terms of biological role, molecular chaperone. Has ATPase activity. This chain is Chaperone protein HtpG, found in Geobacter metallireducens (strain ATCC 53774 / DSM 7210 / GS-15).